The following is a 293-amino-acid chain: tRNA(His) guanylyltransferase (293 aa).

The Mg(2+) site is built by D29, G30, and D76. Residues 29–34 and 75–76 contribute to the GTP site; these read DGRGFT and SD. Residues 226 to 252 form a disordered region; sequence KKVSEEEAEEMSSSAVPEVKSKSQVEK.

This sequence belongs to the tRNA(His) guanylyltransferase family. It depends on Mg(2+) as a cofactor.

The catalysed reaction is a 5'-end ribonucleotide-tRNA(His) + GTP + ATP + H2O = a 5'-end phospho-guanosine-ribonucleotide-tRNA(His) + AMP + 2 diphosphate + H(+). In terms of biological role, adds a GMP to the 5'-end of tRNA(His) after transcription and RNase P cleavage. This is tRNA(His) guanylyltransferase (rgt-1) from Neurospora crassa (strain ATCC 24698 / 74-OR23-1A / CBS 708.71 / DSM 1257 / FGSC 987).